The following is a 498-amino-acid chain: Calcium uptake protein, mitochondrial (498 aa).

Residues 1-29 (MPALSHYRSVSSLPSVDRSFLLIQRLRIH) constitute a mitochondrion transit peptide. 4 consecutive EF-hand domains span residues 216 to 241 (EFFMLFDVDNDGLISFKEYIFFVTLL), 243 to 278 (IPESSFAVAFKMFDTDNNGEIDKEEFKTVMSLMRSQ), 329 to 364 (LTEEMLRLEFAHYDYKRRGSISAKDFALSMVAAADA), and 437 to 472 (LSDNVIEIAFHVFDSNQDGNLSVDEFLRVLHRRERD). Residues D222, D224, D226, E233, D256, D258, N260, E262, and E267 each contribute to the Ca(2+) site. 5 residues coordinate Ca(2+): D450, N452, D454, N456, and E461.

It belongs to the MICU1 family. MICU1 subfamily. Expressed in both green and non-green tissues, including roots, shoots, floral buds and pollen.

The protein localises to the mitochondrion inner membrane. The protein resides in the mitochondrion intermembrane space. Functionally, calcium-binding protein maintaining matrix calcium levels at low concentration. Regulates mitochondrial calcium dynamics in planta by restricting influx. The polypeptide is Calcium uptake protein, mitochondrial (Arabidopsis thaliana (Mouse-ear cress)).